The following is a 514-amino-acid chain: Cilia- and flagella-associated protein 53 (514 aa).

Coiled coils occupy residues Val91–Val176 and Trp205–Ala478. 2 disordered regions span residues Gln261 to Ile296 and Gln495 to Leu514.

The protein belongs to the CFAP53 family. In terms of assembly, microtubule inner protein component of sperm flagellar doublet microtubules. Interacts with PIERCE1 and PIERCE2; the interactions link outer dynein arms docking complex (ODA-DC) to the internal microtubule inner proteins (MIP) in cilium axoneme. Interacts with CCDC38. Interacts with CCDC42 and IFT88. Interacts with centriolar satellite proteins PIBF1/CEP90 and PCM1. Interacts with dyneins DNAIC1, DNAIC2 AND DNAH11 and with ODA-DC component ODAD4/TTC25. In terms of tissue distribution, expressed predominantly in testis (at protein level). In embryos at 8 dpc, specifically expressed in the node, in particular within the pit cells that are located at the center of the node and have rotating monocilia on their apical surface. In the adult, expressed in epithelial cells of the trachea, brain ventricles, oviduct and testis.

It localises to the cytoplasm. It is found in the cytoskeleton. Its subcellular location is the cilium axoneme. The protein localises to the flagellum axoneme. The protein resides in the microtubule organizing center. It localises to the centrosome. It is found in the centriolar satellite. Its subcellular location is the spindle pole. In terms of biological role, microtubule inner protein (MIP) part of the dynein-decorated doublet microtubules (DMTs) in cilia axoneme, which is required for motile cilia beating. Regulates motility patterns of both 9+0 and 9+2 motile cilia through differential localization and recruitment of axonemal dynein components. Required for centriolar satellite integrity and non-motile cilium assembly. Required for motile cilium formation. Through its role in the beating of primary cilia, involved in the establishment of organ laterality during embryogenesis. Required for sperm flagellum biogenesis and is essential for male fertility. The polypeptide is Cilia- and flagella-associated protein 53 (Mus musculus (Mouse)).